The primary structure comprises 264 residues: 4-hydroxy-tetrahydrodipicolinate reductase (264 aa).

Gly9–Met14 serves as a coordination point for NAD(+). Arg36 contributes to the NADP(+) binding site. Residues Gly100–Thr102 and Ser121–Met124 contribute to the NAD(+) site. The active-site Proton donor/acceptor is His154. Residue His155 coordinates (S)-2,3,4,5-tetrahydrodipicolinate. The active-site Proton donor is the Lys158. Gly164–Thr165 contributes to the (S)-2,3,4,5-tetrahydrodipicolinate binding site.

It belongs to the DapB family.

It is found in the cytoplasm. It catalyses the reaction (S)-2,3,4,5-tetrahydrodipicolinate + NAD(+) + H2O = (2S,4S)-4-hydroxy-2,3,4,5-tetrahydrodipicolinate + NADH + H(+). It carries out the reaction (S)-2,3,4,5-tetrahydrodipicolinate + NADP(+) + H2O = (2S,4S)-4-hydroxy-2,3,4,5-tetrahydrodipicolinate + NADPH + H(+). Its pathway is amino-acid biosynthesis; L-lysine biosynthesis via DAP pathway; (S)-tetrahydrodipicolinate from L-aspartate: step 4/4. In terms of biological role, catalyzes the conversion of 4-hydroxy-tetrahydrodipicolinate (HTPA) to tetrahydrodipicolinate. The polypeptide is 4-hydroxy-tetrahydrodipicolinate reductase (Wolbachia sp. subsp. Brugia malayi (strain TRS)).